The chain runs to 226 residues: Putative mitochondrial outer membrane protein porin 5 (226 aa).

This sequence belongs to the eukaryotic mitochondrial porin (TC 1.B.8.1) family.

The protein localises to the mitochondrion outer membrane. In terms of biological role, putative channel that allows diffusion of small hydrophilic molecules through membranes. This Arabidopsis thaliana (Mouse-ear cress) protein is Putative mitochondrial outer membrane protein porin 5 (VDAC5).